The chain runs to 430 residues: Purine nucleoside phosphorylase LACC1 (430 aa).

K247 bears the N6-acetyllysine mark. Residues H250, C284, and H301 each coordinate Zn(2+).

This sequence belongs to the purine nucleoside phosphorylase YfiH/LACC1 family. As to quaternary structure, interacts with FASN. Interacts with SDHA. Interacts with ATF6, EIF2AK3 and ERN1. Phosphorylated on tyrosine residues. Ubiquitously expressed, with higher expression levels in immune-related tissues such as lymph nodes and spleen. Expressed in both intestinal and peripheral myeloid-derived cells.

The protein resides in the cytoplasm. Its subcellular location is the nucleus. It localises to the endoplasmic reticulum. It is found in the peroxisome. It catalyses the reaction adenosine + phosphate = alpha-D-ribose 1-phosphate + adenine. It carries out the reaction inosine + phosphate = alpha-D-ribose 1-phosphate + hypoxanthine. The catalysed reaction is guanosine + phosphate = alpha-D-ribose 1-phosphate + guanine. The enzyme catalyses S-methyl-5'-thioadenosine + phosphate = 5-(methylsulfanyl)-alpha-D-ribose 1-phosphate + adenine. It catalyses the reaction adenosine + H2O + H(+) = inosine + NH4(+). Purine nucleoside enzyme that catalyzes the phosphorolysis of adenosine, guanosine and inosine nucleosides, yielding D-ribose 1-phosphate and the respective free bases, adenine, guanine and hypoxanthine. Also catalyzes the phosphorolysis of S-methyl-5'-thioadenosine into adenine and S-methyl-5-thio-alpha-D-ribose 1-phosphate. Also has adenosine deaminase activity. Acts as a regulator of innate immunity in macrophages by modulating the purine nucleotide metabolism, thereby regulating the metabolic function and bioenergetic state of macrophages. Enables a purine nucleotide cycle between adenosine and inosine monophosphate and adenylosuccinate that prevents cytoplasmic acidification and balances the cytoplasmic-mitochondrial redox interface. The purine nucleotide cycle consumes aspartate and releases fumarate in a manner involving fatty acid oxidation and ATP-citrate lyase activity. Participates in pattern recognition receptor (PRR)-induced cytokines in macrophages: associates with the NOD2-signaling complex and promotes optimal NOD2-induced signaling, cytokine secretion and bacterial clearance. Localizes to the endoplasmic reticulum upon PRR stimulation of macrophages and associates with endoplasmic reticulum-stress sensors, promoting the endoplasmic reticulum unfolded protein response (UPR). Does not show laccase activity. In Homo sapiens (Human), this protein is Purine nucleoside phosphorylase LACC1.